The chain runs to 164 residues: Peptidyl-prolyl cis-trans isomerase B (164 aa).

One can recognise a PPIase cyclophilin-type domain in the interval 1-162 (MVTFHTNHGD…EDVIIESVTV (162 aa)).

It belongs to the cyclophilin-type PPIase family.

The protein localises to the cytoplasm. It carries out the reaction [protein]-peptidylproline (omega=180) = [protein]-peptidylproline (omega=0). With respect to regulation, inhibition by cyclosporin A with a Ki of 25 to 50 mu-mol, a concentration 1000-fold higher than that required for eukaryotic PPIases. Its function is as follows. PPIases accelerate the folding of proteins. It catalyzes the cis-trans isomerization of proline imidic peptide bonds in oligopeptides. This chain is Peptidyl-prolyl cis-trans isomerase B (ppiB), found in Escherichia coli (strain K12).